A 437-amino-acid polypeptide reads, in one-letter code: CCA-adding enzyme (437 aa).

ATP is bound by residues serine 50 and lysine 53. The CTP site is built by serine 50 and lysine 53. Positions 61, 63, and 112 each coordinate Mg(2+). Residues histidine 135, lysine 155, and tyrosine 164 each contribute to the ATP site. Residues histidine 135, lysine 155, and tyrosine 164 each contribute to the CTP site.

Belongs to the tRNA nucleotidyltransferase/poly(A) polymerase family. Archaeal CCA-adding enzyme subfamily. In terms of assembly, homodimer. Mg(2+) serves as cofactor.

It catalyses the reaction a tRNA precursor + 2 CTP + ATP = a tRNA with a 3' CCA end + 3 diphosphate. It carries out the reaction a tRNA with a 3' CCA end + 2 CTP + ATP = a tRNA with a 3' CCACCA end + 3 diphosphate. Catalyzes the addition and repair of the essential 3'-terminal CCA sequence in tRNAs without using a nucleic acid template. Adds these three nucleotides in the order of C, C, and A to the tRNA nucleotide-73, using CTP and ATP as substrates and producing inorganic pyrophosphate. tRNA 3'-terminal CCA addition is required both for tRNA processing and repair. Also involved in tRNA surveillance by mediating tandem CCA addition to generate a CCACCA at the 3' terminus of unstable tRNAs. While stable tRNAs receive only 3'-terminal CCA, unstable tRNAs are marked with CCACCA and rapidly degraded. The polypeptide is CCA-adding enzyme (Thermoplasma volcanium (strain ATCC 51530 / DSM 4299 / JCM 9571 / NBRC 15438 / GSS1)).